We begin with the raw amino-acid sequence, 435 residues long: T-box transcription factor T (435 aa).

A DNA-binding region (T-box) is located at residues 51–219 (LWLRFKELTN…YNPFAKAFLD (169 aa)). Positions 279–308 (YPTLRSHRSSPYPSPYAHRNNSPTYSDNSP) are disordered. The span at 297 to 308 (RNNSPTYSDNSP) shows a compositional bias: polar residues.

In terms of assembly, monomer. Detected in testis, but not in other, normal tissues. Detected in lung tumors (at protein level).

It is found in the nucleus. Its function is as follows. Involved in the transcriptional regulation of genes required for mesoderm formation and differentiation. Binds to a palindromic T site 5'-TTCACACCTAGGTGTGAA-3' DNA sequence and activates gene transcription when bound to such a site. This is T-box transcription factor T from Homo sapiens (Human).